The primary structure comprises 185 residues: Elongation factor P (185 aa).

The protein belongs to the elongation factor P family.

It is found in the cytoplasm. Its pathway is protein biosynthesis; polypeptide chain elongation. Its function is as follows. Involved in peptide bond synthesis. Stimulates efficient translation and peptide-bond synthesis on native or reconstituted 70S ribosomes in vitro. Probably functions indirectly by altering the affinity of the ribosome for aminoacyl-tRNA, thus increasing their reactivity as acceptors for peptidyl transferase. The protein is Elongation factor P of Staphylococcus saprophyticus subsp. saprophyticus (strain ATCC 15305 / DSM 20229 / NCIMB 8711 / NCTC 7292 / S-41).